The primary structure comprises 328 residues: Interferon regulatory factor 1 (328 aa).

Positions 5–113 form a DNA-binding region, IRF tryptophan pentad repeat; it reads RMRMRPWLEM…SAVRVYRMLP (109 aa). At K78 the chain carries N6-acetyllysine. Positions 92–164 are disordered; the sequence is EEVKDQSRNK…STLPDDHSSY (73 aa). Over residues 141 to 157 the composition is skewed to low complexity; that stretch reads GDSSPDTLSDGLSSSTL. Residues K276 and K300 each participate in a glycyl lysine isopeptide (Lys-Gly) (interchain with G-Cter in SUMO) cross-link.

The protein belongs to the IRF family. As to quaternary structure, monomer. Homodimer. Interacts with EP300. Interacts with MYD88. Interacts with PIAS3. Interacts with SPOP. Post-translationally, phosphorylated by CK2 and this positively regulates its activity. Sumoylation represses the transcriptional activity and displays enhanced resistance to protein degradation. Sumoylated by UBE2I/UBC9 and SUMO1. Inactivates the tumor suppressor activity. Elevated levels in tumor cells. Major site is Lys-276. Sumoylation is enhanced by PIAS3. Desumoylated by SENP1 in tumor cells and appears to compete with ubiquitination on C-terminal sites. In terms of processing, ubiquitinated in a SPOP-depedent manner. Appears to compete with sumoylation on C-terminal sites.

It localises to the nucleus. The protein localises to the cytoplasm. With respect to regulation, activated by MYD88. In terms of biological role, transcriptional regulator which displays a remarkable functional diversity in the regulation of cellular responses. Regulates transcription of IFN and IFN-inducible genes, host response to viral and bacterial infections, regulation of many genes expressed during hematopoiesis, inflammation, immune responses and cell proliferation and differentiation, regulation of the cell cycle and induction of growth arrest and programmed cell death following DNA damage. Stimulates both innate and acquired immune responses through the activation of specific target genes and can act as a transcriptional activator and repressor regulating target genes by binding to an interferon-stimulated response element (ISRE) in their promoters. Has an essentail role in IFNG-dependent immunity to mycobacteria. Binds to a consensus sequence in gene promoters. Its target genes for transcriptional activation activity include: genes involved in anti-viral response, such as IFN-alpha/beta, RIGI, TNFSF10/TRAIL, ZBP1, OAS1/2, PIAS1/GBP, EIF2AK2/PKR and RSAD2/viperin; antibacterial response, such as GBP2, GBP5 and NOS2/INOS; anti-proliferative response, such as p53/TP53, LOX and CDKN1A; apoptosis, such as BBC3/PUMA, CASP1, CASP7 and CASP8; immune response, such as IL7, IL12A/B and IL15, PTGS2/COX2 and CYBB; DNA damage responses and DNA repair, such as POLQ/POLH; MHC class I expression, such as TAP1, PSMB9/LMP2, PSME1/PA28A, PSME2/PA28B and B2M and MHC class II expression, such as CIITA; metabolic enzymes, such as ACOD1/IRG1. Represses genes involved in anti-proliferative response, such as BIRC5/survivin, CCNB1, CCNE1, CDK1, CDK2 and CDK4 and in immune response, such as FOXP3, IL4, ANXA2 and TLR4. Stimulates p53/TP53-dependent transcription through enhanced recruitment of EP300 leading to increased acetylation of p53/TP53. Plays an important role in immune response directly affecting NK maturation and activity, macrophage production of IL12, Th1 development and maturation of CD8+ T-cells. Also implicated in the differentiation and maturation of dendritic cells and in the suppression of regulatory T (Treg) cells development. Acts as a tumor suppressor and plays a role not only in antagonism of tumor cell growth but also in stimulating an immune response against tumor cells. The chain is Interferon regulatory factor 1 (Irf1) from Rattus norvegicus (Rat).